A 617-amino-acid chain; its full sequence is V-type proton ATPase catalytic subunit A (617 aa).

Asp-2 carries the N-acetylalanine modification. Thr-136 is subject to Phosphothreonine. An ATP-binding site is contributed by 250–257 (GAFGCGKT). Phosphoserine; by AMPK is present on Ser-384.

This sequence belongs to the ATPase alpha/beta chains family. As to quaternary structure, V-ATPase is a heteromultimeric enzyme made up of two complexes: the ATP-hydrolytic V1 complex and the proton translocation V0 complex. The V1 complex consists of three catalytic AB heterodimers that form a heterohexamer, three peripheral stalks each consisting of EG heterodimers, one central rotor including subunits D and F, and the regulatory subunits C and H. The proton translocation complex V0 consists of the proton transport subunit a, a ring of proteolipid subunits c9c'', rotary subunit d, subunits e and f, and the accessory subunits ATP6AP1/Ac45 and ATP6AP2/PRR. Interacts with the V0 complex V-ATPase subunit a4 ATP6V0A4. Interacts with WFS1. Interacts with alpha-crystallin B chain/CRYAB and with MTOR, forming a ternary complex. (Microbial infection) Interacts with Rabies virus protein M; this interaction promotes virion uncoating. Post-translationally, phosphorylation at Ser-384 by AMPK down-regulates its enzyme activity. High expression in the skin.

The protein localises to the cytoplasm. It localises to the cytosol. The protein resides in the cytoplasmic vesicle. It is found in the secretory vesicle. Its subcellular location is the clathrin-coated vesicle membrane. The protein localises to the lysosome. The catalysed reaction is ATP + H2O + 4 H(+)(in) = ADP + phosphate + 5 H(+)(out). ATP hydrolysis occurs at the interface between the nucleotide-binding domains of subunits A and B. ATP hydrolysis triggers a conformational change in the subunits D and F, which induces a shift of subunit d. The c-ring is subsequently rotated and results in a continuous proton translocation across the membrane. Catalytic subunit of the V1 complex of vacuolar(H+)-ATPase (V-ATPase), a multisubunit enzyme composed of a peripheral complex (V1) that hydrolyzes ATP and a membrane integral complex (V0) that translocates protons. V-ATPase is responsible for acidifying and maintaining the pH of intracellular compartments and in some cell types, is targeted to the plasma membrane, where it is responsible for acidifying the extracellular environment. In aerobic conditions, involved in intracellular iron homeostasis, thus triggering the activity of Fe(2+) prolyl hydroxylase (PHD) enzymes, and leading to HIF1A hydroxylation and subsequent proteasomal degradation. May play a role in neurite development and synaptic connectivity. In terms of biological role, (Microbial infection) Plays an important role in virion uncoating during Rabies virus replication after membrane fusion. Specifically, participates in the dissociation of incoming viral matrix M proteins uncoating through direct interaction. The protein is V-type proton ATPase catalytic subunit A (ATP6V1A) of Homo sapiens (Human).